The following is a 94-amino-acid chain: Co-chaperonin GroES (94 aa).

The protein belongs to the GroES chaperonin family. In terms of assembly, heptamer of 7 subunits arranged in a ring. Interacts with the chaperonin GroEL.

Its subcellular location is the cytoplasm. Functionally, together with the chaperonin GroEL, plays an essential role in assisting protein folding. The GroEL-GroES system forms a nano-cage that allows encapsulation of the non-native substrate proteins and provides a physical environment optimized to promote and accelerate protein folding. GroES binds to the apical surface of the GroEL ring, thereby capping the opening of the GroEL channel. This Geobacillus stearothermophilus (Bacillus stearothermophilus) protein is Co-chaperonin GroES.